Here is a 308-residue protein sequence, read N- to C-terminus: Ecto-ADP-ribosyltransferase 5 (308 aa).

Positions 1 to 23 (MILEDLLMVLSCLALHILWKVQA) are cleaved as a signal peptide. Residues cysteine 43 and cysteine 259 are joined by a disulfide bond. A TR mART core domain is found at 63-253 (ALLRESWEAA…IVTLWSYNQT (191 aa)). Residue tyrosine 100 participates in NAD(+) binding. Asparagine 102 carries an N-linked (GlcNAc...) asparagine glycan. NAD(+) contacts are provided by arginine 161 and glutamine 181. Residue arginine 161 is part of the active site. Residue serine 184 is part of the active site. Asparagine 197 carries N-linked (GlcNAc...) asparagine glycosylation. Residue serine 215 participates in NAD(+) binding. Glutamate 222 is an active-site residue. Residue asparagine 251 is glycosylated (N-linked (GlcNAc...) asparagine).

This sequence belongs to the Arg-specific ADP-ribosyltransferase family.

The protein resides in the secreted. The protein localises to the membrane. The enzyme catalyses L-arginyl-[protein] + NAD(+) = N(omega)-(ADP-D-ribosyl)-L-arginyl-[protein] + nicotinamide + H(+). The sequence is that of Ecto-ADP-ribosyltransferase 5 (Art5) from Rattus norvegicus (Rat).